The following is a 144-amino-acid chain: Gastric inhibitory polypeptide (144 aa).

A signal peptide spans 1–21 (MVALKTCSLLLVLLFLAVGLG). Propeptides lie at residues 22–42 (EKEE…PRGP) and 87–144 (EARA…LRSQ). The segment at 92–112 (ELAGQSQRNEEKEAQGSSLPK) is disordered.

This sequence belongs to the glucagon family. Highly expressed in the duodenum and jejunum.

It is found in the secreted. Functionally, potent stimulator of insulin secretion and relatively poor inhibitor of gastric acid secretion. The chain is Gastric inhibitory polypeptide (Gip) from Rattus norvegicus (Rat).